A 566-amino-acid polypeptide reads, in one-letter code: Sorting nexin lst-4 (566 aa).

The region spanning 1-61 (MAQVKAEYDF…PESYVTPYQA (61 aa)) is the SH3 domain. The interval 59 to 179 (YQASRPPPVL…DRGSNKVNKN (121 aa)) is disordered. The span at 63–77 (RPPPVLPPPLPPTSS) shows a compositional bias: pro residues. Positions 127–140 (DDFDDEWTDEDDEQ) are enriched in acidic residues. A compositionally biased stretch (polar residues) spans 143 to 154 (TRPNVQSSIGSN). Residues 155–173 (SRRDLSRSHSEHGGPDRGS) are compositionally biased toward basic and acidic residues. One can recognise a PX domain in the interval 227–339 (YTCIVDKPKK…HFISCTDEKD (113 aa)). A BAR domain is found at 362–566 (TVPHQPLDPN…KLTSLAARYD (205 aa)).

The protein belongs to the sorting nexin family. In terms of assembly, homodimer. Isoform d interacts (via SH3 domain) with dyn-1. As to expression, expressed in vulval precursor cells (VPCs) and apoptotic germ cells. Colocalizes with actin, dyn-1 and rab-5 in early phagosomes.

The protein localises to the cytoplasm. It localises to the cytoplasmic vesicle. The protein resides in the phagosome membrane. Its function is as follows. Involved in the signaling of vulval development by acting as a negative regulator of epidermal growth factor receptor (EGFR) signaling. Aids in phagosomal membrane tubule formation which is required for phagosomal fusion with endosomes and lysosomes. Also recruits rab-7 to phagosomes by an interaction with dyn-1. These are events leading to phagosome maturation which is a step in apoptotic cell corpse clearance. Binds phosphatidylinositol-3,4,5-trisphosphate. The polypeptide is Sorting nexin lst-4 (Caenorhabditis elegans).